The chain runs to 397 residues: UDP-galactose translocator (397 aa).

The disordered stretch occupies residues 1–21; sequence MAAVGSGGSNAAAGPGAVSAG. The next 10 membrane-spanning stretches (helical) occupy residues 3–23, 37–57, 65–85, 97–117, 140–160, 169–189, 200–220, 238–258, 269–289, and 315–335; these read AVGSGGSNAAAGPGAVSAGSL, YISLAVLVVQNASLILSIRYA, FFATTAVVMAEVLKGLTCLLL, LALFLHEAVLVQYVDTLKLAV, TFQVTYQLKILTTALFSVLML, WASLLLLFTGVAIVQAQQAGG, GAGLAAVVASCLSSGFAGVYF, LGLFGTALGLVGLWWAEGTAV, PAVWGVVLNQAFGGLLVAVVV, and LFGFHVDPLFALGAGLVIGAV. A compositionally biased stretch (low complexity) spans 9 to 21; it reads SNAAAGPGAVSAG. Residues 355-397 are disordered; it reads ASASTSGPCTHQQPPGQPPPPKLSSHRADLSTEPFLPKSVLVK.

This sequence belongs to the nucleotide-sugar transporter family. SLC35A subfamily. Interacts with SLC35A3; the interaction is reduced in the presence of SLC35A4. Found in a complex with SLC35A3 and SLC35A4.

The protein localises to the golgi apparatus membrane. The catalysed reaction is UMP(out) + UDP-alpha-D-galactose(in) = UMP(in) + UDP-alpha-D-galactose(out). It carries out the reaction UDP-N-acetyl-alpha-D-galactosamine(in) + UMP(out) = UDP-N-acetyl-alpha-D-galactosamine(out) + UMP(in). The enzyme catalyses UMP(out) + UDP-alpha-D-glucose(in) = UMP(in) + UDP-alpha-D-glucose(out). It catalyses the reaction UMP(out) + UDP-N-acetyl-alpha-D-glucosamine(in) = UMP(in) + UDP-N-acetyl-alpha-D-glucosamine(out). The catalysed reaction is UDP-alpha-D-galactose(in) + AMP(out) = UDP-alpha-D-galactose(out) + AMP(in). It carries out the reaction UDP-alpha-D-galactose(in) + CMP(out) = UDP-alpha-D-galactose(out) + CMP(in). The enzyme catalyses UDP-N-acetyl-alpha-D-galactosamine(out) + UDP-alpha-D-galactose(in) = UDP-N-acetyl-alpha-D-galactosamine(in) + UDP-alpha-D-galactose(out). It catalyses the reaction UDP-N-acetyl-alpha-D-glucosamine(out) + UDP-alpha-D-galactose(in) = UDP-N-acetyl-alpha-D-glucosamine(in) + UDP-alpha-D-galactose(out). The catalysed reaction is UDP-alpha-D-galactose(in) + UDP-alpha-D-glucose(out) = UDP-alpha-D-galactose(out) + UDP-alpha-D-glucose(in). It carries out the reaction UMP(out) + CMP(in) = UMP(in) + CMP(out). The enzyme catalyses UMP(out) + AMP(in) = UMP(in) + AMP(out). In terms of biological role, transports uridine diphosphate galactose (UDP-galactose) from the cytosol into the Golgi apparatus, functioning as an antiporter that exchanges UDP-galactose for UMP. It is also able to exchange UDP-galactose for AMP and CMP, and to transport UDP-N-acetylgalactosamine (UDP-GalNAc) and other nucleotide sugars. As a provider of UDP-galactose to galactosyltransferases present in the Golgi apparatus, it is necessary for globotriaosylceramide/globoside (Gb3Cer) synthesis from lactosylceramide. The chain is UDP-galactose translocator from Canis lupus familiaris (Dog).